The chain runs to 628 residues: Set1/Ash2 histone methyltransferase complex subunit ASH2 (628 aa).

An N-acetylmethionine modification is found at Met1. Positions Met1–Pro18 are enriched in gly residues. The PHD-type; atypical zinc-finger motif lies at Met1–Asn66. Residues Met1–Gly107 form a disordered region. Over residues Ala36–Ala65 the composition is skewed to low complexity. Residues Leu67–Thr177 are DNA-binding. Ser101 is modified (phosphoserine). The C4-type zinc-finger motif lies at Cys117 to Cys150. A compositionally biased stretch (basic and acidic residues) spans Leu235–Pro252. Positions Leu235–Pro331 are disordered. A compositionally biased stretch (polar residues) spans Asn270–Asn282. Over residues Leu283 to Gly295 the composition is skewed to gly residues. Arg296 is modified (asymmetric dimethylarginine; by PRMT1 and PRMT5). Ser316 is modified (phosphoserine). Positions Ser316 to Pro628 are interaction with RBBP5. In terms of domain architecture, B30.2/SPRY spans Leu360–Lys583.

As to quaternary structure, interacts with HCFC1. Core component of several methyltransferase-containing complexes including MLL1/MLL, MLL2/3 (also named ASCOM complex) and MLL4/WBP7. Each complex is at least composed of ASH2L, RBBP5, WDR5, DPY30, one or more specific histone methyltransferases (KMT2A/MLL1, KMT2D/MLL2, KMT2C/MLL3 and KMT2B/MLL4), and the facultative components PAGR1, BACC1, CHD8, E2F6, HCFC1, HCFC2, HSP70, INO80C, KDM6A, KANSL1, LAS1L, MAX, MCRS1, MEN1, MGA, KAT8/MOF, NCOA6, PAXIP1/PTIP, PELP1, PHF20, PRP31, RING2, RUVB1/TIP49A, RUVB2/TIP49B, SENP3, TAF1, TAF4, TAF6, TAF7, TAF9, TEX10 and alpha- and beta-tubulin. Component of the SET1 complex, at least composed of the catalytic subunit (SETD1A or SETD1B), WDR5, WDR82, RBBP5, ASH2L/ASH2, CXXC1/CFP1, HCFC1 and DPY30. Found in a complex with RBBP5, ASH2L, DPY30, KMT2A, KMT2D and WDR5. Component of a histone methylation complex composed of at least ZNF335, RBBP5, ASH2L and WDR5; the complex may have histone H3-specific methyltransferase activity, however does not have specificity for 'Lys-4' of histone H3. Within the complex, interacts with ZNF335. Interacts with RBBP5. Components of this complex may associate with components of a nuclear receptor-mediated transcription complex to form a complex at least composed of ZNF335, HCFC1, CCAR2, EMSY, MKI67, RBBP5, ASH2L and WDR5. Within this complex also interacts with CCAR2 and EMSY. Interacts with DPY30. Interacts with SETD1A and SETD1B. Post-translationally, both monomethylated and dimethylated on arginine residues in the C-terminus. Arg-296 is the major site. Methylation is not required for nuclear localization, nor for MLL complex integrity or maintenance of global histone H3K4me3 levels. As to expression, ubiquitously expressed. Predominantly expressed in adult heart and testis and fetal lung and liver, with barely detectable expression in adult lung, liver, kidney, prostate, and peripheral leukocytes.

The protein resides in the nucleus. In terms of biological role, transcriptional regulator. Component or associated component of some histone methyltransferase complexes which regulates transcription through recruitment of those complexes to gene promoters. Component of the Set1/Ash2 histone methyltransferase (HMT) complex, a complex that specifically methylates 'Lys-4' of histone H3, but not if the neighboring 'Lys-9' residue is already methylated. As part of the MLL1/MLL complex it is involved in methylation and dimethylation at 'Lys-4' of histone H3. May play a role in hematopoiesis. In association with RBBP5 and WDR5, stimulates the histone methyltransferase activities of KMT2A, KMT2B, KMT2C, KMT2D, SETD1A and SETD1B. This chain is Set1/Ash2 histone methyltransferase complex subunit ASH2 (ASH2L), found in Homo sapiens (Human).